The chain runs to 929 residues: Lon protease homolog 2, peroxisomal (929 aa).

In terms of domain architecture, Lon N-terminal spans 11–257; sequence LPLVPLPKGS…RVVEILTRQL (247 aa). The segment at 302–325 is disordered; the sequence is GLTPPGLSAGRNNDNDDKESNEVD. 484–491 lines the ATP pocket; the sequence is GPPGVGKT. A Lon proteolytic domain is found at 727-914; sequence HGRPGVVTGL…WEAIRQVWPD (188 aa). Catalysis depends on residues Ser820 and Lys863. Residues 927-929 carry the Microbody targeting signal motif; that stretch reads SRL.

The protein belongs to the peptidase S16 family.

Its subcellular location is the peroxisome matrix. The catalysed reaction is Hydrolysis of proteins in presence of ATP.. In terms of biological role, ATP-dependent serine protease that mediates the selective degradation of misfolded and unassembled polypeptides in the peroxisomal matrix. Necessary for type 2 peroxisome targeting signal (PTS2)-containing protein processing and facilitates peroxisome matrix protein import. This is Lon protease homolog 2, peroxisomal from Aspergillus niger (strain ATCC MYA-4892 / CBS 513.88 / FGSC A1513).